Reading from the N-terminus, the 246-residue chain is Probable transcriptional regulatory protein ASA_2843 (246 aa).

The protein belongs to the TACO1 family.

Its subcellular location is the cytoplasm. In Aeromonas salmonicida (strain A449), this protein is Probable transcriptional regulatory protein ASA_2843.